The chain runs to 255 residues: Endonuclease V (255 aa).

Residues aspartate 42 and aspartate 110 each coordinate Mg(2+).

Belongs to the endonuclease V family. It depends on Mg(2+) as a cofactor.

It localises to the cytoplasm. It catalyses the reaction Endonucleolytic cleavage at apurinic or apyrimidinic sites to products with a 5'-phosphate.. DNA repair enzyme involved in the repair of deaminated bases. Selectively cleaves double-stranded DNA at the second phosphodiester bond 3' to a deoxyinosine leaving behind the intact lesion on the nicked DNA. The sequence is that of Endonuclease V from Aeropyrum pernix (strain ATCC 700893 / DSM 11879 / JCM 9820 / NBRC 100138 / K1).